The primary structure comprises 561 residues: Lysine--tRNA ligase (561 aa).

Residues Glu-409 and Glu-416 each coordinate Mg(2+).

Belongs to the class-II aminoacyl-tRNA synthetase family. In terms of assembly, homodimer. Mg(2+) is required as a cofactor.

The protein resides in the cytoplasm. The enzyme catalyses tRNA(Lys) + L-lysine + ATP = L-lysyl-tRNA(Lys) + AMP + diphosphate. The sequence is that of Lysine--tRNA ligase from Nostoc punctiforme (strain ATCC 29133 / PCC 73102).